The sequence spans 422 residues: Enolase (422 aa).

(2R)-2-phosphoglycerate is bound at residue Q162. Catalysis depends on E204, which acts as the Proton donor. Residues D241, E285, and D312 each coordinate Mg(2+). Positions 337, 366, 367, and 388 each coordinate (2R)-2-phosphoglycerate. The active-site Proton acceptor is K337.

Belongs to the enolase family. Mg(2+) serves as cofactor.

The protein localises to the cytoplasm. The protein resides in the secreted. It is found in the cell surface. It catalyses the reaction (2R)-2-phosphoglycerate = phosphoenolpyruvate + H2O. It functions in the pathway carbohydrate degradation; glycolysis; pyruvate from D-glyceraldehyde 3-phosphate: step 4/5. Its function is as follows. Catalyzes the reversible conversion of 2-phosphoglycerate (2-PG) into phosphoenolpyruvate (PEP). It is essential for the degradation of carbohydrates via glycolysis. The polypeptide is Enolase (Streptococcus thermophilus).